Consider the following 153-residue polypeptide: Small ribosomal subunit protein bS16 (153 aa).

The disordered stretch occupies residues 114–153; that stretch reads ENEPVGEAITPKKKKAKAEDAEAAADAPAEAAAESEAADK. Over residues 137 to 153 the composition is skewed to low complexity; the sequence is AADAPAEAAAESEAADK.

Belongs to the bacterial ribosomal protein bS16 family.

The polypeptide is Small ribosomal subunit protein bS16 (Rhodococcus jostii (strain RHA1)).